The sequence spans 101 residues: Small ribosomal subunit protein bS16 (101 aa).

It belongs to the bacterial ribosomal protein bS16 family.

The polypeptide is Small ribosomal subunit protein bS16 (Ureaplasma urealyticum serovar 10 (strain ATCC 33699 / Western)).